The following is a 343-amino-acid chain: Dihydroorotate dehydrogenase (quinone) (343 aa).

FMN contacts are provided by residues 61 to 65 (AGLDK) and Thr-85. Residue Lys-65 coordinates substrate. 110 to 114 (NRMGF) is a substrate binding site. The FMN site is built by Asn-138 and Asn-171. Position 171 (Asn-171) interacts with substrate. The active-site Nucleophile is the Ser-174. Asn-176 provides a ligand contact to substrate. Positions 216 and 244 each coordinate FMN. 245-246 (NT) contacts substrate. FMN-binding positions include Gly-267, Gly-296, and 317–318 (YS).

The protein belongs to the dihydroorotate dehydrogenase family. Type 2 subfamily. In terms of assembly, monomer. It depends on FMN as a cofactor.

Its subcellular location is the cell membrane. The catalysed reaction is (S)-dihydroorotate + a quinone = orotate + a quinol. It functions in the pathway pyrimidine metabolism; UMP biosynthesis via de novo pathway; orotate from (S)-dihydroorotate (quinone route): step 1/1. In terms of biological role, catalyzes the conversion of dihydroorotate to orotate with quinone as electron acceptor. The chain is Dihydroorotate dehydrogenase (quinone) from Pseudomonas syringae pv. tomato (strain ATCC BAA-871 / DC3000).